Reading from the N-terminus, the 261-residue chain is Non-structural protein 2a (261 aa).

The protein belongs to the coronaviruses ns2a protein family.

It is found in the host cytoplasm. In terms of biological role, not essential for virus replication in transformed murine cells. The protein is Non-structural protein 2a of Mus musculus (Mouse).